The sequence spans 200 residues: MDKKKHGTVQSADETIAAAGFAGEAAQGKGEDVQSVAAEERIRQLETELAAKEAEAAANWDKFVRERADLENYRRRTQKEKEELLKYGNESLLQDILPVVDSMERALGHADSESLSAVIEGIRMTHGMLLGTLKKFGVVAVEAERGTVFDPAYHQAMCQVEVSELPPNTVVEVFQRGYLLNERLLRPAMVSVATVPKDAA.

It belongs to the GrpE family. Homodimer.

It localises to the cytoplasm. In terms of biological role, participates actively in the response to hyperosmotic and heat shock by preventing the aggregation of stress-denatured proteins, in association with DnaK and GrpE. It is the nucleotide exchange factor for DnaK and may function as a thermosensor. Unfolded proteins bind initially to DnaJ; upon interaction with the DnaJ-bound protein, DnaK hydrolyzes its bound ATP, resulting in the formation of a stable complex. GrpE releases ADP from DnaK; ATP binding to DnaK triggers the release of the substrate protein, thus completing the reaction cycle. Several rounds of ATP-dependent interactions between DnaJ, DnaK and GrpE are required for fully efficient folding. This is Protein GrpE from Geobacter sulfurreducens (strain ATCC 51573 / DSM 12127 / PCA).